A 443-amino-acid chain; its full sequence is Tubulin beta chain (443 aa).

The GTP site is built by glutamine 11, glutamate 69, serine 138, glycine 142, threonine 143, glycine 144, asparagine 204, and asparagine 226. Glutamate 69 serves as a coordination point for Mg(2+).

Belongs to the tubulin family. Dimer of alpha and beta chains. A typical microtubule is a hollow water-filled tube with an outer diameter of 25 nm and an inner diameter of 15 nM. Alpha-beta heterodimers associate head-to-tail to form protofilaments running lengthwise along the microtubule wall with the beta-tubulin subunit facing the microtubule plus end conferring a structural polarity. Microtubules usually have 13 protofilaments but different protofilament numbers can be found in some organisms and specialized cells. Mg(2+) is required as a cofactor.

Its subcellular location is the cytoplasm. The protein resides in the cytoskeleton. Tubulin is the major constituent of microtubules, a cylinder consisting of laterally associated linear protofilaments composed of alpha- and beta-tubulin heterodimers. Microtubules grow by the addition of GTP-tubulin dimers to the microtubule end, where a stabilizing cap forms. Below the cap, tubulin dimers are in GDP-bound state, owing to GTPase activity of alpha-tubulin. The sequence is that of Tubulin beta chain from Thalassiosira weissflogii (Marine diatom).